Consider the following 402-residue polypeptide: Glutamate N-acetyltransferase (402 aa).

Residues Thr146, Lys172, Thr185, Glu267, Asn397, and Thr402 each coordinate substrate. Thr185 functions as the Nucleophile in the catalytic mechanism.

The protein belongs to the ArgJ family. Heterotetramer of two alpha and two beta chains.

It is found in the cytoplasm. The catalysed reaction is N(2)-acetyl-L-ornithine + L-glutamate = N-acetyl-L-glutamate + L-ornithine. It functions in the pathway amino-acid biosynthesis; L-arginine biosynthesis; L-ornithine and N-acetyl-L-glutamate from L-glutamate and N(2)-acetyl-L-ornithine (cyclic): step 1/1. With respect to regulation, competitively inhibited by L-ornithine. Catalyzes the transfer of the acetyl group from N(2)-acetylornithine to glutamate, forming N-acetylglutamate and L-ornithine. This is Glutamate N-acetyltransferase from Methanocaldococcus jannaschii (strain ATCC 43067 / DSM 2661 / JAL-1 / JCM 10045 / NBRC 100440) (Methanococcus jannaschii).